We begin with the raw amino-acid sequence, 565 residues long: Oxygen-dependent choline dehydrogenase (565 aa).

7–36 (DYIICGAGSAGNVLATRLTEDPDVTVLLLE) is an FAD binding site. H474 functions as the Proton acceptor in the catalytic mechanism.

The protein belongs to the GMC oxidoreductase family. It depends on FAD as a cofactor.

It carries out the reaction choline + A = betaine aldehyde + AH2. The enzyme catalyses betaine aldehyde + NAD(+) + H2O = glycine betaine + NADH + 2 H(+). It functions in the pathway amine and polyamine biosynthesis; betaine biosynthesis via choline pathway; betaine aldehyde from choline (cytochrome c reductase route): step 1/1. Involved in the biosynthesis of the osmoprotectant glycine betaine. Catalyzes the oxidation of choline to betaine aldehyde and betaine aldehyde to glycine betaine at the same rate. This is Oxygen-dependent choline dehydrogenase from Burkholderia thailandensis (strain ATCC 700388 / DSM 13276 / CCUG 48851 / CIP 106301 / E264).